The chain runs to 851 residues: Venom phosphodiesterase 1 (851 aa).

The first 23 residues, 1–23 (MIQQKVLFISLVAVTLGLGLGLG), serve as a signal peptide directing secretion. 2 consecutive SMB domains span residues 30-73 (PQVS…VLPT) and 74-118 (QSWS…GETS). Disulfide bonds link C34-C38, C34-C51, C38-C69, C49-C51, C49-C62, C55-C61, C62-C69, C78-C83, C78-C95, C83-C113, C93-C95, C93-C106, C99-C105, C106-C113, C124-C170, and C132-C344. N-linked (GlcNAc...) asparagine glycosylation occurs at N39. The Cell attachment site signature appears at 58–60 (RQA). A divalent metal cation-binding residues include D147 and T185. The AMP-threonine intermediate role is filled by T185. N216, N259, and N270 each carry an N-linked (GlcNAc...) asparagine glycan. K271 is an AMP binding site. A divalent metal cation-binding residues include D305, H309, D352, and H353. Position 309 (H309) interacts with AMP. Intrachain disulfides connect C360–C457, C408–C793, C541–C599, C554–C654, C556–C639, and C762–C772. An N-linked (GlcNAc...) asparagine glycan is attached at N405. H462 is a binding site for a divalent metal cation. N-linked (GlcNAc...) asparagine glycans are attached at residues N512, N594, N674, and N745.

This sequence belongs to the nucleotide pyrophosphatase/phosphodiesterase family. In terms of assembly, monomer cleaved in two subunits; disulfide-linked. Is synthesized as a single-chain protein and is subsequently cleaved to form a two-subunit protein held together with disulfide bonds. A divalent metal cation is required as a cofactor. In terms of tissue distribution, expressed by venom gland.

It is found in the secreted. It catalyses the reaction ADP + H2O = AMP + phosphate + H(+). Hydrolyzes ADP with high activity. Shows weak or no activity on 5'-AMP, 5'-GMP, 3'-AMP, ATP, cAMP, and cGMP. Is devoid of monophosphatase and proteinase activities. Dose-dependently inhibits platelet aggregation induced by ADP and collagen. The sequence is that of Venom phosphodiesterase 1 from Crotalus adamanteus (Eastern diamondback rattlesnake).